We begin with the raw amino-acid sequence, 722 residues long: Polyribonucleotide nucleotidyltransferase (722 aa).

Residues Asp487 and Asp493 each contribute to the Mg(2+) site. The region spanning 554 to 613 is the KH domain; that stretch reads PRMVSFKIHPDKIREVIGKGGATIQALTKETGCSIDIKDDGTVTIASTSAEGMAEAKARI. In terms of domain architecture, S1 motif spans 623-691; the sequence is GKIYEGPVVK…ERGRLRLSLK (69 aa).

It belongs to the polyribonucleotide nucleotidyltransferase family. Mg(2+) is required as a cofactor.

Its subcellular location is the cytoplasm. The catalysed reaction is RNA(n+1) + phosphate = RNA(n) + a ribonucleoside 5'-diphosphate. In terms of biological role, involved in mRNA degradation. Catalyzes the phosphorolysis of single-stranded polyribonucleotides processively in the 3'- to 5'-direction. In Polynucleobacter asymbioticus (strain DSM 18221 / CIP 109841 / QLW-P1DMWA-1) (Polynucleobacter necessarius subsp. asymbioticus), this protein is Polyribonucleotide nucleotidyltransferase.